Consider the following 303-residue polypeptide: Mycothiol acetyltransferase (303 aa).

1D-myo-inositol 2-(L-cysteinylamino)-2-deoxy-alpha-D-glucopyranoside is bound at residue Asp-33. Acetyl-CoA is bound by residues 78 to 80 (VVV) and 86 to 91 (RRGTGS). An N-acetyltransferase domain is found at 150–303 (VRFATYSGPH…AYAAVAPTDV (154 aa)). 3 residues coordinate 1D-myo-inositol 2-(L-cysteinylamino)-2-deoxy-alpha-D-glucopyranoside: Glu-177, Lys-218, and Glu-226. Position 230–232 (230–232 (VGV)) interacts with acetyl-CoA. Position 269 (Tyr-269) interacts with 1D-myo-inositol 2-(L-cysteinylamino)-2-deoxy-alpha-D-glucopyranoside. 274–279 (NTAAVK) is an acetyl-CoA binding site.

The protein belongs to the acetyltransferase family. MshD subfamily. As to quaternary structure, monomer.

The catalysed reaction is 1D-myo-inositol 2-(L-cysteinylamino)-2-deoxy-alpha-D-glucopyranoside + acetyl-CoA = mycothiol + CoA + H(+). Catalyzes the transfer of acetyl from acetyl-CoA to desacetylmycothiol (Cys-GlcN-Ins) to form mycothiol. This Mycolicibacterium gilvum (strain PYR-GCK) (Mycobacterium gilvum (strain PYR-GCK)) protein is Mycothiol acetyltransferase.